Reading from the N-terminus, the 430-residue chain is ETS domain-containing protein Elk-4 (430 aa).

The segment at residues 5 to 85 is a DNA-binding region (ETS); that stretch reads ITLWQFLLQL…NGQKFVYKFV (81 aa). Residues 116–127 are compositionally biased toward basic and acidic residues; sequence SKDVEYGGKERP. The disordered stretch occupies residues 116 to 138; the sequence is SKDVEYGGKERPPQPGAKTSSRN. Residue K166 forms a Glycyl lysine isopeptide (Lys-Gly) (interchain with G-Cter in SUMO2) linkage. Disordered regions lie at residues 245–279 and 292–325; these read TTFNPTPPVPSTPLPLKEPPRTPSPPLSSNPDIDT and PENLSLEPKNEDSALPEKDKTNNSSRSKKPKGLE. Residues 249-272 are compositionally biased toward pro residues; sequence PTPPVPSTPLPLKEPPRTPSPPLS. Basic and acidic residues predominate over residues 299–312; sequence PKNEDSALPEKDKT.

Belongs to the ETS family. As to quaternary structure, interacts with SIRT7. Lung and liver.

Its subcellular location is the nucleus. Its function is as follows. Involved in both transcriptional activation and repression. Interaction with SIRT7 leads to recruitment and stabilization of SIRT7 at promoters, followed by deacetylation of histone H3 at 'Lys-18' (H3K18Ac) and subsequent transcription repression. Forms a ternary complex with the serum response factor (SRF). Requires DNA-bound SRF for ternary complex formation and makes extensive DNA contacts to the 5'side of SRF, but does not bind DNA autonomously. This chain is ETS domain-containing protein Elk-4 (Elk4), found in Mus musculus (Mouse).